Consider the following 1368-residue polypeptide: Beclin-1-like protein A (1368 aa).

2 stretches are compositionally biased toward low complexity: residues 24–57 and 122–135; these read GSGS…NNGP and NSII…SPSN. Disordered stretches follow at residues 24-64, 122-249, 331-431, 819-874, and 992-1048; these read GSGS…PSSE, NSII…SLMM, NKNN…STNS, TITP…NNNN, and IDGN…NDNN. The segment covering 136–147 has biased composition (polar residues); that stretch reads AITRNNSFNMDP. The segment covering 148 to 167 has biased composition (low complexity); that stretch reads NNNNNNNNNNNNNNNNNNNN. A compositionally biased stretch (polar residues) spans 168–177; sequence GEYMNSSIVF. Residues 179–246 are compositionally biased toward low complexity; the sequence is NNVNNNNNNP…INNSVNSVNS (68 aa). 2 stretches are compositionally biased toward low complexity: residues 992–1005 and 1015–1048; these read IDGN…NDNN and NNNN…NDNN. A coiled-coil region spans residues 1047–1150; sequence NNYNFENEIN…AIRDQLERVS (104 aa).

The protein belongs to the beclin family.

The protein localises to the endosome membrane. In terms of biological role, involved in autophagy. May be required to recruit the atg8-phosphatidylinositol conjugate and the atg12-atg5 conjugate to the pre-autophagosomal structure. Required for normal survival when exposed to pathogenic bacteria S.typhimurium by promoting autophagic degradation of intracellular S.typhimurium. The polypeptide is Beclin-1-like protein A (atg6A) (Dictyostelium discoideum (Social amoeba)).